A 254-amino-acid polypeptide reads, in one-letter code: Probable phosphoglycerate mutase 4 (254 aa).

Residues 10 to 17 and 23 to 24 each bind substrate; these read RHGESTWN and SC. Catalysis depends on His-11, which acts as the Tele-phosphohistidine intermediate. 2 positions are modified to phosphoserine: Ser-14 and Ser-23. A Phosphotyrosine modification is found at Tyr-26. A Phosphoserine modification is found at Ser-31. Substrate-binding positions include Arg-62, 89-92, and Lys-100; that span reads ERHY. Glu-89 acts as the Proton donor/acceptor in catalysis. Position 106 is an N6-acetyllysine (Lys-106). A substrate-binding site is contributed by 116–117; that stretch reads RR. Position 118 is a phosphoserine (Ser-118). A substrate-binding site is contributed by 187–188; that stretch reads GN. Lys-251 carries the post-translational modification N6-acetyllysine; alternate. Lys-251 carries the N6-succinyllysine; alternate modification. Residues Lys-253 and Lys-254 each carry the N6-acetyllysine modification.

The protein belongs to the phosphoglycerate mutase family. BPG-dependent PGAM subfamily.

The catalysed reaction is (2R)-2-phosphoglycerate = (2R)-3-phosphoglycerate. It catalyses the reaction (2R)-3-phospho-glyceroyl phosphate = (2R)-2,3-bisphosphoglycerate + H(+). This Pan troglodytes (Chimpanzee) protein is Probable phosphoglycerate mutase 4 (PGAM4).